The following is a 201-amino-acid chain: Small ribosomal subunit protein uS4 (201 aa).

Residues 91 to 155 (SRLDNVVYRA…STLPFQVARE (65 aa)) form the S4 RNA-binding domain.

Belongs to the universal ribosomal protein uS4 family. As to quaternary structure, part of the 30S ribosomal subunit. Contacts protein S5. The interaction surface between S4 and S5 is involved in control of translational fidelity.

Functionally, one of the primary rRNA binding proteins, it binds directly to 16S rRNA where it nucleates assembly of the body of the 30S subunit. Its function is as follows. With S5 and S12 plays an important role in translational accuracy. In Rhodococcus jostii (strain RHA1), this protein is Small ribosomal subunit protein uS4.